Consider the following 283-residue polypeptide: MITGKTHVTGIMGHPLGHSLSPIMHNAAFRSLGMDWIYVPFPVKPENLKAAVEGLRALGVEGVNVTIPHKEAVLEYIDDIHGTAALIGAVNTLKFDDGTVRGYNTDASGCLRALEEVTSVEGSSVLILGAGGAARACAFQLAEKGASDITILNRTPEKARLLAEDMADKLGFEASYGGYELIQGSVKSADILIDTTPVGMHPHTDDRPLVGAELMHEGLVVHDLVYNPQRTVLLREAERASAIPVSGIRMLLYQGVEAFRIWTGRDPPLDVMEDALKRVLNRD.

Shikimate is bound by residues 19–21 (SLS) and Thr-66. Lys-70 (proton acceptor) is an active-site residue. Positions 91 and 106 each coordinate shikimate. NADP(+)-binding positions include 129-133 (GAGGA), 153-158 (NRTPEK), and Leu-224. Tyr-226 serves as a coordination point for shikimate. Gly-247 contacts NADP(+).

Belongs to the shikimate dehydrogenase family. Homodimer.

The catalysed reaction is shikimate + NADP(+) = 3-dehydroshikimate + NADPH + H(+). It participates in metabolic intermediate biosynthesis; chorismate biosynthesis; chorismate from D-erythrose 4-phosphate and phosphoenolpyruvate: step 4/7. In terms of biological role, involved in the biosynthesis of the chorismate, which leads to the biosynthesis of aromatic amino acids. Catalyzes the reversible NADPH linked reduction of 3-dehydroshikimate (DHSA) to yield shikimate (SA). The sequence is that of Shikimate dehydrogenase (NADP(+)) from Methanothermobacter thermautotrophicus (strain ATCC 29096 / DSM 1053 / JCM 10044 / NBRC 100330 / Delta H) (Methanobacterium thermoautotrophicum).